The chain runs to 246 residues: 1-(5-phosphoribosyl)-5-[(5-phosphoribosylamino)methylideneamino] imidazole-4-carboxamide isomerase (246 aa).

The active-site Proton acceptor is the Asp-8. Catalysis depends on Asp-130, which acts as the Proton donor.

The protein belongs to the HisA/HisF family.

The protein localises to the cytoplasm. It carries out the reaction 1-(5-phospho-beta-D-ribosyl)-5-[(5-phospho-beta-D-ribosylamino)methylideneamino]imidazole-4-carboxamide = 5-[(5-phospho-1-deoxy-D-ribulos-1-ylimino)methylamino]-1-(5-phospho-beta-D-ribosyl)imidazole-4-carboxamide. Its pathway is amino-acid biosynthesis; L-histidine biosynthesis; L-histidine from 5-phospho-alpha-D-ribose 1-diphosphate: step 4/9. This is 1-(5-phosphoribosyl)-5-[(5-phosphoribosylamino)methylideneamino] imidazole-4-carboxamide isomerase from Shigella sonnei (strain Ss046).